The chain runs to 170 residues: CASP-like protein 2D1 (170 aa).

Residues 1–4 (MLKL) are Cytoplasmic-facing. Residues 5-25 (LDFSLRLSVIPLSVATIWLTV) form a helical membrane-spanning segment. At 26-47 (TNKQDNSIYGYLKYSDLTGLKY) the chain is on the extracellular side. Residues 48–68 (MVFISGICASYAFIAAVSTWI) form a helical membrane-spanning segment. At 69–83 (RCIVTKTWLFFVSDQ) the chain is on the cytoplasmic side. Residues 84-104 (IVAYLMVTSGTAVLEILYLAY) form a helical membrane-spanning segment. Topologically, residues 105 to 127 (NGDREVSWSEACTSYGKFCYRMK) are extracellular. A helical transmembrane segment spans residues 128 to 148 (LAVILHALALSCFIILAVISA). The Cytoplasmic portion of the chain corresponds to 149 to 170 (YRAFSIFEPPLVPSKVVEEDRA).

Belongs to the Casparian strip membrane proteins (CASP) family. In terms of assembly, homodimer and heterodimers.

It is found in the cell membrane. The chain is CASP-like protein 2D1 from Populus trichocarpa (Western balsam poplar).